A 122-amino-acid chain; its full sequence is Small ribosomal subunit protein uS13 (122 aa).

Positions 99 to 122 are disordered; that stretch reads RGQRTHTNARTRKGPAKAIAGKKK.

It belongs to the universal ribosomal protein uS13 family. In terms of assembly, part of the 30S ribosomal subunit. Forms a loose heterodimer with protein S19. Forms two bridges to the 50S subunit in the 70S ribosome.

Its function is as follows. Located at the top of the head of the 30S subunit, it contacts several helices of the 16S rRNA. In the 70S ribosome it contacts the 23S rRNA (bridge B1a) and protein L5 of the 50S subunit (bridge B1b), connecting the 2 subunits; these bridges are implicated in subunit movement. Contacts the tRNAs in the A and P-sites. The chain is Small ribosomal subunit protein uS13 from Rhodopseudomonas palustris (strain BisA53).